Consider the following 94-residue polypeptide: Co-chaperonin GroES (94 aa).

The protein belongs to the GroES chaperonin family. In terms of assembly, heptamer of 7 subunits arranged in a ring. Interacts with the chaperonin GroEL.

It is found in the cytoplasm. Functionally, together with the chaperonin GroEL, plays an essential role in assisting protein folding. The GroEL-GroES system forms a nano-cage that allows encapsulation of the non-native substrate proteins and provides a physical environment optimized to promote and accelerate protein folding. GroES binds to the apical surface of the GroEL ring, thereby capping the opening of the GroEL channel. The sequence is that of Co-chaperonin GroES from Pediococcus pentosaceus (strain ATCC 25745 / CCUG 21536 / LMG 10740 / 183-1w).